The following is a 443-amino-acid chain: MRNAIIRCLFYGSLTFGIWTALLFIYLHHNHVSNWQKKSHEPLSAWSPGKKVHQQIIYGSDQIPKPHVIVKRTDEDKAESTLGMDFNHTNPELHNELLKYGFNVIISRSLGIEREVPDTRNKMCLQKHYPARLPTASIVICFHNEEFHALFRTVSSVMNLTPHYFLEEIILVDDMSEVDDLKEKLDYHLETFRGKIKIIRNKKREGLIRARLIGASHASGDVLVILDSHCEVNRVWLEPLLHAIAKDPKMVVRPLIDVIDDRTLEYKPSPVVRGAFDWNLQFKWDNVFSYEMDGPEGPTKPIRSPAMSGGIFAIRRHYFNEIGQYDKDMDFWGGENLELSLRIWMCGGQLFIIPCSRVGHISKKQTRKTSAIISATIHNYLRLVHVWLDEYKEQFFLRKPGLKYVTYGNIHERVQLRKRLGCKSFQWYLDNVFPELEASVNRS.

At 1–4 (MRNA) the chain is on the cytoplasmic side. Residues 5–27 (IIRCLFYGSLTFGIWTALLFIYL) traverse the membrane as a helical; Signal-anchor for type II membrane protein segment. The Lumenal portion of the chain corresponds to 28–443 (HHNHVSNWQK…PELEASVNRS (416 aa)). The N-linked (GlcNAc...) asparagine glycan is linked to N87. Intrachain disulfides connect C124-C355 and C346-C422. The catalytic subdomain A stretch occupies residues 133–243 (LPTASIVICF…RVWLEPLLHA (111 aa)). Residues D174 and R204 each contribute to the substrate site. D227 contributes to the Mn(2+) binding site. S228 provides a ligand contact to substrate. Mn(2+) is bound at residue H229. The interval 301-363 (PIRSPAMSGG…PCSRVGHISK (63 aa)) is catalytic subdomain B. W332 provides a ligand contact to substrate. H360 is a Mn(2+) binding site.

This sequence belongs to the glycosyltransferase 2 family. GalNAc-T subfamily. It depends on Mn(2+) as a cofactor. As to expression, expressed in testis.

Its subcellular location is the late endosome membrane. Probable inactive glycosyltransferase required during spermatid development. May participate in protein loading into the acrosomes and accumulation of ubiquitin-proteasome systems around the head-tail coupling apparatus region. In Macaca fascicularis (Crab-eating macaque), this protein is Inactive polypeptide N-acetylgalactosaminyltransferase-like protein 5 (GALNTL5).